The following is a 485-amino-acid chain: Cobyric acid synthase (485 aa).

The 188-residue stretch at Lys-252–Gln-439 folds into the GATase cobBQ-type domain. Residue Cys-334 is the Nucleophile of the active site. Residue His-431 is part of the active site.

The protein belongs to the CobB/CobQ family. CobQ subfamily.

The protein operates within cofactor biosynthesis; adenosylcobalamin biosynthesis. Its function is as follows. Catalyzes amidations at positions B, D, E, and G on adenosylcobyrinic A,C-diamide. NH(2) groups are provided by glutamine, and one molecule of ATP is hydrogenolyzed for each amidation. In Azorhizobium caulinodans (strain ATCC 43989 / DSM 5975 / JCM 20966 / LMG 6465 / NBRC 14845 / NCIMB 13405 / ORS 571), this protein is Cobyric acid synthase.